We begin with the raw amino-acid sequence, 211 residues long: PITH domain-containing protein GA19395 (211 aa).

Positions aspartate 20–arginine 192 constitute a PITH domain.

It belongs to the PITHD1 family.

The polypeptide is PITH domain-containing protein GA19395 (Drosophila pseudoobscura pseudoobscura (Fruit fly)).